We begin with the raw amino-acid sequence, 3434 residues long: Genome polyprotein (3434 aa).

The Cytoplasmic segment spans residues Met1–Asn106. Residues Ser2–Asn15 are interaction with host EXOC1. Residues Leu37–Ile72 are hydrophobic; homodimerization of capsid protein C. A propeptide spans Gly105 to Ser126 (ER anchor for the capsid protein C, removed in mature form by serine protease NS3). The chain crosses the membrane as a helical span at residues Asn107 to Ser126. The Extracellular segment spans residues Leu127–Met248. Residue Asn141 is glycosylated (N-linked (GlcNAc...) asparagine; by host). A helical membrane pass occupies residues Lys249 to Ser273. Over Asn274 to Arg278 the chain is Cytoplasmic. Residues Val279–Ser293 form a helical membrane-spanning segment. Topologically, residues Phe294 to Leu745 are extracellular. 8 cysteine pairs are disulfide-bonded: Cys296/Cys323, Cys353/Cys409, Cys353/Cys414, Cys367/Cys398, Cys385/Cys409, Cys385/Cys414, Cys483/Cys580, and Cys597/Cys628. A fusion peptide region spans residues Asp391–Gly404. Residues Phe746–Val766 traverse the membrane as a helical segment. Residues Asn767–Ser772 lie on the Cytoplasmic side of the membrane. A helical transmembrane segment spans residues Ile773 to Ala793. At Asp794–Asp1218 the chain is on the extracellular side. Intrachain disulfides connect Cys797/Cys808 and Cys848/Cys936. Asn923, Asn968, and Asn1000 each carry an N-linked (GlcNAc...) asparagine; by host glycan. Intrachain disulfides connect Cys972–Cys1016, Cys1073–Cys1122, Cys1084–Cys1105, Cys1084–Cys1106, Cys1105–Cys1109, and Cys1106–Cys1109. The helical transmembrane segment at Val1219–Phe1239 threads the bilayer. The Cytoplasmic segment spans residues Leu1240 to Asn1249. Residues Ile1250–Leu1270 form a helical membrane-spanning segment. Over Pro1271–Ala1286 the chain is Lumenal. A helical membrane pass occupies residues Ala1287–Met1307. A topological domain (cytoplasmic) is located at residue Arg1308. A helical membrane pass occupies residues Leu1309–Gly1329. Residues Glu1330–Gly1340 lie on the Lumenal side of the membrane. Residues Ala1341 to Ala1361 form a helical membrane-spanning segment. The Cytoplasmic portion of the chain corresponds to Gly1362 to Gly1373. Residues Trp1374 to Ala1394 traverse the membrane as a helical segment. Topologically, residues Glu1395–Asp1397 are lumenal. Residues Val1398–Ser1418 traverse the membrane as a helical segment. At Gly1419 to Thr1475 the chain is on the cytoplasmic side. The interval Leu1426–Val1465 is interacts with and activates NS3 protease. An intramembrane region (helical) is located at residues Ala1476–Leu1496. Residues Thr1497–Leu2173 are Cytoplasmic-facing. The 178-residue stretch at Gly1504–Ala1681 folds into the Peptidase S7 domain. Active-site charge relay system; for serine protease NS3 activity residues include His1554, Asp1578, and Ser1638. The Helicase ATP-binding domain maps to Ala1684–Gln1840. The interval Arg1688 to Gln1691 is important for RNA-binding. Leu1697–Thr1704 serves as a coordination point for ATP. A DEAH box motif is present at residues Asp1788–His1791. The Helicase C-terminal domain occupies Gly1851 to Glu2016. Lys1892 is modified (N6-acetyllysine; by host). Residues Ala1956 to Gly1980 are disordered. The interval Glu2167–Asp2171 is regulates the ATPase activity of NS3 helicase. Residues Glu2174 to Val2194 traverse the membrane as a helical segment. Residues Gln2195–Gly2198 lie on the Lumenal side of the membrane. Positions Ile2199–Ala2219 form an intramembrane region, helical. Residue Asp2220 is a topological domain, lumenal. The chain crosses the membrane as a helical span at residues Val2221–Ile2241. The Cytoplasmic segment spans residues Pro2242–Ala2256. A helical transmembrane segment spans residues Val2257–Leu2277. Over Glu2278–Ala2313 the chain is Lumenal. An intramembrane region (helical) is located at residues Thr2314–Val2334. Over Thr2335–Thr2368 the chain is Lumenal. The helical transmembrane segment at Val2369–Ala2389 threads the bilayer. The Cytoplasmic segment spans residues Ala2390–Lys2446. The helical transmembrane segment at Val2447–Thr2467 threads the bilayer. The Lumenal portion of the chain corresponds to Thr2468–Glu2471. The helical transmembrane segment at Ala2472–Trp2492 threads the bilayer. Topologically, residues Asn2493–Leu3434 are cytoplasmic. The 266-residue stretch at Gly2530–Ala2795 folds into the mRNA cap 0-1 NS5-type MT domain. The tract at residues Ser2567–Gly2587 is disordered. Ser2585 is an S-adenosyl-L-methionine binding site. At Ser2585 the chain carries Phosphoserine. Residue Lys2590 is the For 2'-O-MTase activity of the active site. Residues Gly2615, Trp2616, Thr2633, Lys2634, Asp2660, and Val2661 each contribute to the S-adenosyl-L-methionine site. Residue Asp2675 is the For 2'-O-MTase activity of the active site. Position 2676 (Ile2676) interacts with S-adenosyl-L-methionine. Catalysis depends on for 2'-O-MTase activity residues Lys2711 and Glu2747. Position 2749 (Tyr2749) interacts with S-adenosyl-L-methionine. Residues Glu2969, His2973, Cys2978, and Cys2981 each contribute to the Zn(2+) site. Residues Gly3059–Ala3211 enclose the RdRp catalytic domain. The Zn(2+) site is built by His3246, Cys3262, and Cys3381.

The protein in the N-terminal section; belongs to the class I-like SAM-binding methyltransferase superfamily. mRNA cap 0-1 NS5-type methyltransferase family. In terms of assembly, homodimer. Interacts (via N-terminus) with host EXOC1 (via C-terminus); this interaction results in EXOC1 degradation through the proteasome degradation pathway. Forms heterodimers with envelope protein E in the endoplasmic reticulum and Golgi. As to quaternary structure, homodimer; in the endoplasmic reticulum and Golgi. Interacts with protein prM. Interacts with non-structural protein 1. In terms of assembly, homodimer; Homohexamer when secreted. Interacts with envelope protein E. NS1 interacts with NS4B. Interacts with host complement protein CFH; this interaction leads to the degradation of C3. Interacts (via N-terminus) with serine protease NS3. As to quaternary structure, forms a heterodimer with serine protease NS3. May form homooligomers. In terms of assembly, forms a heterodimer with NS2B. Interacts with non-structural protein 2A (via N-terminus). Interacts with NS4B. Interacts with unphosphorylated RNA-directed RNA polymerase NS5; this interaction stimulates RNA-directed RNA polymerase NS5 guanylyltransferase activity. Interacts with serine protease NS3. As to quaternary structure, homodimer. Interacts with host STAT2; this interaction inhibits the phosphorylation of the latter, and, when all viral proteins are present (polyprotein), targets STAT2 for degradation. Interacts with serine protease NS3. In terms of processing, specific enzymatic cleavages in vivo yield mature proteins. Cleavages in the lumen of endoplasmic reticulum are performed by host signal peptidase, whereas cleavages in the cytoplasmic side are performed by serine protease NS3. Signal cleavage at the 2K-4B site requires a prior NS3 protease-mediated cleavage at the 4A-2K site. Cleaved in post-Golgi vesicles by a host furin, releasing the mature small envelope protein M, and peptide pr. This cleavage is incomplete as up to 30% of viral particles still carry uncleaved prM. Post-translationally, N-glycosylated. In terms of processing, N-glycosylated. The excreted form is glycosylated and this is required for efficient secretion of the protein from infected cells. Acetylated by host KAT5. Acetylation modulates NS3 RNA-binding and unwinding activities and plays an important positive role for viral replication. Post-translationally, phosphorylated on serines residues. This phosphorylation may trigger NS5 nuclear localization.

It localises to the virion. The protein resides in the host nucleus. It is found in the host cytoplasm. Its subcellular location is the host perinuclear region. The protein localises to the secreted. It localises to the virion membrane. The protein resides in the host endoplasmic reticulum membrane. It carries out the reaction Selective hydrolysis of -Xaa-Xaa-|-Yaa- bonds in which each of the Xaa can be either Arg or Lys and Yaa can be either Ser or Ala.. It catalyses the reaction RNA(n) + a ribonucleoside 5'-triphosphate = RNA(n+1) + diphosphate. The catalysed reaction is a ribonucleoside 5'-triphosphate + H2O = a ribonucleoside 5'-diphosphate + phosphate + H(+). The enzyme catalyses ATP + H2O = ADP + phosphate + H(+). It carries out the reaction a 5'-end (5'-triphosphoguanosine)-ribonucleoside in mRNA + S-adenosyl-L-methionine = a 5'-end (N(7)-methyl 5'-triphosphoguanosine)-ribonucleoside in mRNA + S-adenosyl-L-homocysteine. It catalyses the reaction a 5'-end (N(7)-methyl 5'-triphosphoguanosine)-ribonucleoside in mRNA + S-adenosyl-L-methionine = a 5'-end (N(7)-methyl 5'-triphosphoguanosine)-(2'-O-methyl-ribonucleoside) in mRNA + S-adenosyl-L-homocysteine + H(+). Plays a role in virus budding by binding to the cell membrane and gathering the viral RNA into a nucleocapsid that forms the core of a mature virus particle. During virus entry, may induce genome penetration into the host cytoplasm after hemifusion induced by the surface proteins. Can migrate to the cell nucleus where it modulates host functions. Overcomes the anti-viral effects of host EXOC1 by sequestering and degrading the latter through the proteasome degradation pathway. In terms of biological role, inhibits RNA silencing by interfering with host Dicer. Its function is as follows. Prevents premature fusion activity of envelope proteins in trans-Golgi by binding to envelope protein E at pH6.0. After virion release in extracellular space, gets dissociated from E dimers. Functionally, acts as a chaperone for envelope protein E during intracellular virion assembly by masking and inactivating envelope protein E fusion peptide. prM is the only viral peptide matured by host furin in the trans-Golgi network probably to avoid catastrophic activation of the viral fusion activity in acidic Golgi compartment prior to virion release. prM-E cleavage is inefficient, and many virions are only partially matured. These uncleaved prM would play a role in immune evasion. May play a role in virus budding. Exerts cytotoxic effects by activating a mitochondrial apoptotic pathway through M ectodomain. May display a viroporin activity. In terms of biological role, binds to host cell surface receptor and mediates fusion between viral and cellular membranes. Envelope protein is synthesized in the endoplasmic reticulum in the form of heterodimer with protein prM. They play a role in virion budding in the ER, and the newly formed immature particle is covered with 60 spikes composed of heterodimer between precursor prM and envelope protein E. The virion is transported to the Golgi apparatus where the low pH causes dissociation of PrM-E heterodimers and formation of E homodimers. prM-E cleavage is inefficient, and many virions are only partially matured. These uncleaved prM would play a role in immune evasion. Its function is as follows. Involved in immune evasion, pathogenesis and viral replication. Once cleaved off the polyprotein, is targeted to three destinations: the viral replication cycle, the plasma membrane and the extracellular compartment. Essential for viral replication. Required for formation of the replication complex and recruitment of other non-structural proteins to the ER-derived membrane structures. Excreted as a hexameric lipoparticle that plays a role against host immune response. Antagonizing the complement function. Binds to the host macrophages and dendritic cells. Inhibits signal transduction originating from Toll-like receptor 3 (TLR3). Functionally, component of the viral RNA replication complex that functions in virion assembly and antagonizes the host alpha/beta interferon antiviral response. Required cofactor for the serine protease function of NS3. May have membrane-destabilizing activity and form viroporins. In terms of biological role, displays three enzymatic activities: serine protease, NTPase and RNA helicase. NS3 serine protease, in association with NS2B, performs its autocleavage and cleaves the polyprotein at dibasic sites in the cytoplasm: C-prM, NS2A-NS2B, NS2B-NS3, NS3-NS4A, NS4A-2K and NS4B-NS5. NS3 RNA helicase binds RNA and unwinds dsRNA in the 3' to 5' direction. Its function is as follows. Regulates the ATPase activity of the NS3 helicase activity. NS4A allows NS3 helicase to conserve energy during unwinding. Functionally, functions as a signal peptide for NS4B and is required for the interferon antagonism activity of the latter. Induces the formation of ER-derived membrane vesicles where the viral replication takes place. Inhibits interferon (IFN)-induced host STAT1 phosphorylation and nuclear translocation, thereby preventing the establishment of cellular antiviral state by blocking the IFN-alpha/beta pathway. Inhibits STAT2 translocation in the nucleus after IFN-alpha treatment. In terms of biological role, replicates the viral (+) and (-) RNA genome, and performs the capping of genomes in the cytoplasm. NS5 methylates viral RNA cap at guanine N-7 and ribose 2'-O positions. Besides its role in RNA genome replication, also prevents the establishment of cellular antiviral state by blocking the interferon-alpha/beta (IFN-alpha/beta) signaling pathway. Inhibits host TYK2 and STAT2 phosphorylation, thereby preventing activation of JAK-STAT signaling pathway. The sequence is that of Genome polyprotein from Usutu virus (USUV).